A 373-amino-acid chain; its full sequence is tRNA (guanine(26)-N(2))-dimethyltransferase (373 aa).

Positions 2 to 365 constitute a Trm1 methyltransferase domain; the sequence is KIISEGETKL…AELSDLVVLI (364 aa). Residues Arg35, Arg66, Asp86, Asp113, and Ala114 each coordinate S-adenosyl-L-methionine.

It belongs to the class I-like SAM-binding methyltransferase superfamily. Trm1 family.

The enzyme catalyses guanosine(26) in tRNA + 2 S-adenosyl-L-methionine = N(2)-dimethylguanosine(26) in tRNA + 2 S-adenosyl-L-homocysteine + 2 H(+). In terms of biological role, dimethylates a single guanine residue at position 26 of a number of tRNAs using S-adenosyl-L-methionine as donor of the methyl groups. The sequence is that of tRNA (guanine(26)-N(2))-dimethyltransferase from Methanococcus maripaludis (strain C7 / ATCC BAA-1331).